We begin with the raw amino-acid sequence, 159 residues long: Small ribosomal subunit protein uS7 (159 aa).

It belongs to the universal ribosomal protein uS7 family. As to quaternary structure, part of the 30S ribosomal subunit. Contacts proteins S9 and S11.

In terms of biological role, one of the primary rRNA binding proteins, it binds directly to 16S rRNA where it nucleates assembly of the head domain of the 30S subunit. Is located at the subunit interface close to the decoding center, probably blocks exit of the E-site tRNA. This is Small ribosomal subunit protein uS7 from Sulfurihydrogenibium sp. (strain YO3AOP1).